We begin with the raw amino-acid sequence, 211 residues long: Secreted phosphoprotein 24 (211 aa).

Positions 1-29 are cleaved as a signal peptide; that stretch reads MISRMEKMTMMMKILIMFALGMNYWSCSG. Cystine bridges form between Cys-92-Cys-103 and Cys-116-Cys-134. At Ser-96 the chain carries Phosphoserine. Phosphoserine occurs at positions 145, 146, 170, 173, and 182.

Belongs to the SPP2 family. In terms of processing, phosphorylation sites are present in the extracellular medium. As to expression, detected in liver and plasma.

The protein resides in the secreted. Functionally, could coordinate an aspect of bone turnover. The protein is Secreted phosphoprotein 24 (SPP2) of Homo sapiens (Human).